A 411-amino-acid chain; its full sequence is Lissencephaly-1 homolog (411 aa).

The region spanning 9–41 (QREELNQAIADYLGSNGYADSLETFRKEADLST) is the LisH domain. A coiled-coil region spans residues 56–83 (TSVIRLQKKVMELEAKLTEAEKEVIEGA). 7 WD repeats span residues 106–147 (GHRA…RSLK), 148–187 (GHTDSVQDVAFDAQGKLLASCSADLSIKLWDFQQSYECIK), 191–230 (GHDHNVSSVAFVPAGDYVLSASRDRTIKMWEVATGYCVKT), 233–272 (GHREWVRMVRVHIEGSIFATCSNDQTIRVWLTNSKDCKVE), 275–334 (DHEH…CLLT), 337–376 (GHDNWVRGLAFHPGGKYLVSASDDKTIRVWDLRNKRCMKT), and 379–411 (AHQHFCTSIDFHKAHPYVISGSVDQTVKVWECR).

This sequence belongs to the WD repeat LIS1/nudF family.

The protein resides in the cytoplasm. Its subcellular location is the cytoskeleton. It is found in the microtubule organizing center. It localises to the centrosome. Positively regulates the activity of the minus-end directed microtubule motor protein dynein. May enhance dynein-mediated microtubule sliding by targeting dynein to the microtubule plus end. Required for several dynein- and microtubule-dependent processes. The polypeptide is Lissencephaly-1 homolog (Drosophila yakuba (Fruit fly)).